The sequence spans 333 residues: Glycerol-3-phosphate dehydrogenase [NAD(P)+] (333 aa).

5 residues coordinate NADPH: serine 10, tryptophan 11, histidine 31, arginine 32, and lysine 105. Sn-glycerol 3-phosphate contacts are provided by lysine 105, glycine 136, and serine 138. Alanine 140 lines the NADPH pocket. Sn-glycerol 3-phosphate is bound by residues lysine 191, aspartate 244, serine 254, arginine 255, and asparagine 256. Lysine 191 serves as the catalytic Proton acceptor. Residue arginine 255 participates in NADPH binding. NADPH contacts are provided by valine 279 and glutamate 281.

Belongs to the NAD-dependent glycerol-3-phosphate dehydrogenase family.

The protein resides in the cytoplasm. The enzyme catalyses sn-glycerol 3-phosphate + NAD(+) = dihydroxyacetone phosphate + NADH + H(+). It carries out the reaction sn-glycerol 3-phosphate + NADP(+) = dihydroxyacetone phosphate + NADPH + H(+). Its pathway is membrane lipid metabolism; glycerophospholipid metabolism. Its function is as follows. Catalyzes the reduction of the glycolytic intermediate dihydroxyacetone phosphate (DHAP) to sn-glycerol 3-phosphate (G3P), the key precursor for phospholipid synthesis. In Chlorobium limicola (strain DSM 245 / NBRC 103803 / 6330), this protein is Glycerol-3-phosphate dehydrogenase [NAD(P)+].